The sequence spans 372 residues: Transaldolase 2 (372 aa).

The Schiff-base intermediate with substrate role is filled by K140.

It belongs to the transaldolase family. Type 2 subfamily.

It localises to the cytoplasm. It carries out the reaction D-sedoheptulose 7-phosphate + D-glyceraldehyde 3-phosphate = D-erythrose 4-phosphate + beta-D-fructose 6-phosphate. It participates in carbohydrate degradation; pentose phosphate pathway; D-glyceraldehyde 3-phosphate and beta-D-fructose 6-phosphate from D-ribose 5-phosphate and D-xylulose 5-phosphate (non-oxidative stage): step 2/3. Transaldolase is important for the balance of metabolites in the pentose-phosphate pathway. This Streptomyces coelicolor (strain ATCC BAA-471 / A3(2) / M145) protein is Transaldolase 2.